Here is a 228-residue protein sequence, read N- to C-terminus: L-ribulose-5-phosphate 4-epimerase UlaF (228 aa).

Substrate is bound by residues 26–27, 43–44, and 72–73; these read GN, SG, and SS. Zn(2+)-binding residues include aspartate 74, histidine 93, and histidine 95. The active-site Proton donor/acceptor is the aspartate 118. Position 167 (histidine 167) interacts with Zn(2+). Tyrosine 225 (proton donor/acceptor) is an active-site residue.

Belongs to the aldolase class II family. AraD/FucA subfamily. Zn(2+) serves as cofactor.

The enzyme catalyses L-ribulose 5-phosphate = D-xylulose 5-phosphate. The protein operates within cofactor degradation; L-ascorbate degradation; D-xylulose 5-phosphate from L-ascorbate: step 4/4. Catalyzes the isomerization of L-ribulose 5-phosphate to D-xylulose 5-phosphate. Is involved in the anaerobic L-ascorbate utilization. This chain is L-ribulose-5-phosphate 4-epimerase UlaF, found in Salmonella choleraesuis (strain SC-B67).